The following is a 308-amino-acid chain: Elongation factor Ts (308 aa).

Positions 80 to 83 are involved in Mg(2+) ion dislocation from EF-Tu; the sequence is TDFV.

It belongs to the EF-Ts family.

Its subcellular location is the cytoplasm. Its function is as follows. Associates with the EF-Tu.GDP complex and induces the exchange of GDP to GTP. It remains bound to the aminoacyl-tRNA.EF-Tu.GTP complex up to the GTP hydrolysis stage on the ribosome. The polypeptide is Elongation factor Ts (Rhizobium johnstonii (strain DSM 114642 / LMG 32736 / 3841) (Rhizobium leguminosarum bv. viciae)).